The primary structure comprises 371 residues: Cytochrome b (371 aa).

A run of 4 helical transmembrane segments spans residues 25 to 45 (FGSM…FLAV), 69 to 90 (WMMQ…YIHI), 105 to 125 (WMSG…GYVL), and 170 to 190 (FFAL…LHII). Positions 75 and 89 each coordinate heme b. Residues histidine 174 and histidine 188 each coordinate heme b. Residue histidine 193 participates in a ubiquinone binding. The next 4 helical transmembrane spans lie at 218–238 (HKDL…VSFF), 280–300 (LGGA…PFTH), 312–332 (FSQL…WAAT), and 339–358 (FIVI…LLIP).

This sequence belongs to the cytochrome b family. The cytochrome bc1 complex contains 3 respiratory subunits (MT-CYB, CYC1 and UQCRFS1), 2 core proteins (UQCRC1 and UQCRC2) and probably 6 low-molecular weight proteins. Heme b serves as cofactor.

The protein resides in the mitochondrion inner membrane. Its function is as follows. Component of the ubiquinol-cytochrome c reductase complex (complex III or cytochrome b-c1 complex) that is part of the mitochondrial respiratory chain. The b-c1 complex mediates electron transfer from ubiquinol to cytochrome c. Contributes to the generation of a proton gradient across the mitochondrial membrane that is then used for ATP synthesis. In Leiopython albertisii (Northern white-lipped python), this protein is Cytochrome b (MT-CYB).